A 415-amino-acid polypeptide reads, in one-letter code: Tyrosine--tRNA ligase (415 aa).

Y34 contacts L-tyrosine. The 'HIGH' region motif lies at 39–48; the sequence is PSAKSIHLGN. The L-tyrosine site is built by Y163 and Q167. A 'KMSKS' region motif is present at residues 225–229; sequence KFGKS. K228 serves as a coordination point for ATP. The 66-residue stretch at 349-414 folds into the S4 RNA-binding domain; the sequence is EKIIDILDRA…GKKKIFIIKK (66 aa).

It belongs to the class-I aminoacyl-tRNA synthetase family. TyrS type 1 subfamily. In terms of assembly, homodimer.

It is found in the cytoplasm. It catalyses the reaction tRNA(Tyr) + L-tyrosine + ATP = L-tyrosyl-tRNA(Tyr) + AMP + diphosphate + H(+). Its function is as follows. Catalyzes the attachment of tyrosine to tRNA(Tyr) in a two-step reaction: tyrosine is first activated by ATP to form Tyr-AMP and then transferred to the acceptor end of tRNA(Tyr). This is Tyrosine--tRNA ligase from Mycoplasma mobile (strain ATCC 43663 / 163K / NCTC 11711) (Mesomycoplasma mobile).